Reading from the N-terminus, the 147-residue chain is Methylated-DNA--protein-cysteine methyltransferase (147 aa).

Residue Cys112 is the Nucleophile; methyl group acceptor of the active site.

Belongs to the MGMT family.

It is found in the cytoplasm. It catalyses the reaction a 6-O-methyl-2'-deoxyguanosine in DNA + L-cysteinyl-[protein] = S-methyl-L-cysteinyl-[protein] + a 2'-deoxyguanosine in DNA. The enzyme catalyses a 4-O-methyl-thymidine in DNA + L-cysteinyl-[protein] = a thymidine in DNA + S-methyl-L-cysteinyl-[protein]. In terms of biological role, involved in the cellular defense against the biological effects of O6-methylguanine (O6-MeG) and O4-methylthymine (O4-MeT) in DNA. Repairs the methylated nucleobase in DNA by stoichiometrically transferring the methyl group to a cysteine residue in the enzyme. This is a suicide reaction: the enzyme is irreversibly inactivated. The chain is Methylated-DNA--protein-cysteine methyltransferase from Archaeoglobus fulgidus (strain ATCC 49558 / DSM 4304 / JCM 9628 / NBRC 100126 / VC-16).